The following is a 223-amino-acid chain: Probable Ras-related protein Rab-4A (223 aa).

16–23 (GNAGTGKT) lines the GTP pocket. Residues 38–46 (TQHTIGAEF) carry the Effector region motif. GTP contacts are provided by residues 64–68 (DTAGQ) and 122–125 (NKKD). 2 S-geranylgeranyl cysteine lipidation sites follow: Cys-221 and Cys-223. Cysteine methyl ester is present on Cys-223.

Belongs to the small GTPase superfamily. Rab family.

The protein resides in the cell membrane. Functionally, protein transport. Probably involved in vesicular traffic. In Echinococcus multilocularis (Fox tapeworm), this protein is Probable Ras-related protein Rab-4A.